The sequence spans 332 residues: Very-long-chain 3-oxoacyl-CoA reductase (332 aa).

A helical membrane pass occupies residues 15–35 (GQWALAGIGALYVATRVGAFL). Residues Val-60, Asp-115, Asp-123, Asn-142, Lys-177, Tyr-209, Lys-213, Val-242, and Thr-244 each coordinate NADP(+). The active-site Proton donor is Tyr-209. Residue Lys-213 is the Lowers pKa of active site Tyr of the active site.

This sequence belongs to the short-chain dehydrogenases/reductases (SDR) family.

The protein localises to the endoplasmic reticulum membrane. The enzyme catalyses a very-long-chain (3R)-3-hydroxyacyl-CoA + NADP(+) = a very-long-chain 3-oxoacyl-CoA + NADPH + H(+). It functions in the pathway lipid metabolism; fatty acid biosynthesis. Component of the microsomal membrane bound fatty acid elongation system, which produces the 26-carbon very long-chain fatty acids (VLCFA) from palmitate. Catalyzes the reduction of the 3-ketoacyl-CoA intermediate that is formed in each cycle of fatty acid elongation. VLCFAs serve as precursors for ceramide and sphingolipids. In Neurospora crassa (strain ATCC 24698 / 74-OR23-1A / CBS 708.71 / DSM 1257 / FGSC 987), this protein is Very-long-chain 3-oxoacyl-CoA reductase.